A 326-amino-acid polypeptide reads, in one-letter code: MTTISAKAVSELRKSTGAGMMDCKKALEESGGDLDGAMDYLRKKGQKVAAKRADREASEGVVAAVVEGNKGLLLSLGCETDFVAKNEAFIELTNTIAKMAFDADCKTIDDVNALEIDGTTVKERLVNETGKVGEKIEVTNLEVVEGENLASYIHAGAKIGVLVSYKDGAKDDADQFFRGVSMHIAAMKPSILHPNEFDEEFVQKETEALQAQINAENELNEKENLGKPMKNVPQFASRRQLTPEVLAATEEAIKEELKAEGKPEKIWDKIVPGKLERFIADNTLLDQERCLLSQFYALDDTKTVEAAIKEFHPEAEVVAFKRISVN.

Residues 80-83 form an involved in Mg(2+) ion dislocation from EF-Tu region; the sequence is TDFV.

This sequence belongs to the EF-Ts family.

It localises to the cytoplasm. In terms of biological role, associates with the EF-Tu.GDP complex and induces the exchange of GDP to GTP. It remains bound to the aminoacyl-tRNA.EF-Tu.GTP complex up to the GTP hydrolysis stage on the ribosome. The sequence is that of Elongation factor Ts from Rhodopirellula baltica (strain DSM 10527 / NCIMB 13988 / SH1).